The sequence spans 152 residues: Superoxide dismutase [Cu-Zn] (152 aa).

Ser-2 carries the post-translational modification N-acetylserine. Cu cation is bound by residues His-44, His-46, and His-61. Cys-55 and Cys-144 are disulfide-bonded. His-61, His-69, His-78, and Asp-81 together coordinate Zn(2+). His-118 contacts Cu cation.

The protein belongs to the Cu-Zn superoxide dismutase family. As to quaternary structure, monomer. The cofactor is Cu cation. Zn(2+) is required as a cofactor.

The protein localises to the cytoplasm. The catalysed reaction is 2 superoxide + 2 H(+) = H2O2 + O2. Its activity is regulated as follows. Inhibited by KCN and diethyldithiocarbamate. In terms of biological role, destroys radicals which are normally produced within the cells and which are toxic to biological systems. The plasma superoxide dismutase has phagocytosis-stimulating activity and may play an important role in the biological defenses of the organism. This chain is Superoxide dismutase [Cu-Zn], found in Halocynthia roretzi (Sea squirt).